The chain runs to 424 residues: Enolase (424 aa).

Glutamine 164 contacts (2R)-2-phosphoglycerate. Glutamate 206 functions as the Proton donor in the catalytic mechanism. Mg(2+) is bound by residues aspartate 243, glutamate 284, and aspartate 311. Positions 336, 365, 366, and 387 each coordinate (2R)-2-phosphoglycerate. The active-site Proton acceptor is lysine 336.

The protein belongs to the enolase family. Mg(2+) is required as a cofactor.

It is found in the cytoplasm. Its subcellular location is the secreted. The protein resides in the cell surface. It carries out the reaction (2R)-2-phosphoglycerate = phosphoenolpyruvate + H2O. The protein operates within carbohydrate degradation; glycolysis; pyruvate from D-glyceraldehyde 3-phosphate: step 4/5. Functionally, catalyzes the reversible conversion of 2-phosphoglycerate (2-PG) into phosphoenolpyruvate (PEP). It is essential for the degradation of carbohydrates via glycolysis. The polypeptide is Enolase (Wolbachia sp. subsp. Drosophila simulans (strain wRi)).